Reading from the N-terminus, the 205-residue chain is MAQLYFYYSAMNAGKSTALLQSSYNYQERGMRTVVYTAEIDDRFGAGKVSSRIGLSSPAKLFNQNSSLFDEIRAEHEQQAIHCVLVDECQFLTRQQVYELSEVVDQLDIPVLCYGLRTDFRGELFIGSQYLLAWSDKLVELKTICFCGRKASMVLRLDQAGRPYNEGEQVVIGGNERYVSVCRKHYKEALQVGSLTAIQERHRHD.

Residues 9–16 (SAMNAGKS) and 87–90 (DECQ) each bind ATP. E88 acts as the Proton acceptor in catalysis. Residues C145, C147, C182, and H185 each contribute to the Zn(2+) site.

This sequence belongs to the thymidine kinase family. Homotetramer.

Its subcellular location is the cytoplasm. The catalysed reaction is thymidine + ATP = dTMP + ADP + H(+). With respect to regulation, allosteric enzyme which is feedback inhibited by dTTP and activated by a number of dNDP and dNTP. Phosphorylates both thymidine and deoxyuridine. This is Thymidine kinase from Escherichia coli O157:H7.